The sequence spans 306 residues: D-alanine--D-alanine ligase (306 aa).

In terms of domain architecture, ATP-grasp spans 102–300 (KHVAKAAGIP…FGEFLRWMVE (199 aa)). 128–183 (PMKPPYVVKPVREGSSFGVVIVKEDQSHPPQVITSSEWRYGDRVMVERYIAGRELT) lines the ATP pocket. Positions 252, 267, and 269 each coordinate Mg(2+).

This sequence belongs to the D-alanine--D-alanine ligase family. The cofactor is Mg(2+). Mn(2+) serves as cofactor.

Its subcellular location is the cytoplasm. It carries out the reaction 2 D-alanine + ATP = D-alanyl-D-alanine + ADP + phosphate + H(+). It participates in cell wall biogenesis; peptidoglycan biosynthesis. Functionally, cell wall formation. This is D-alanine--D-alanine ligase from Sinorhizobium fredii (strain NBRC 101917 / NGR234).